The following is a 444-amino-acid chain: Acyl-CoA 6-desaturase (444 aa).

The Cytoplasmic segment spans residues 1-130; the sequence is MGGGGQQTDR…EAEGCFKTQP (130 aa). Positions 18 to 95 constitute a Cytochrome b5 heme-binding domain; sequence FSSYTWEEVQ…LKPLLIGELE (78 aa). The helical transmembrane segment at 131-151 threads the bilayer; sequence LFFALHLGHILLLEAIAFMMV. At 152–157 the chain is on the lumenal side; sequence WYFGTG. The chain crosses the membrane as a helical span at residues 158–178; the sequence is WINTLIVAVILATAQSQAGWL. The Cytoplasmic segment spans residues 179-264; that stretch reads QHDFGHLSVF…KHLPYNHQHK (86 aa). Positions 180–184 match the Histidine box-1 motif; the sequence is HDFGH. The Histidine box-2 signature appears at 217-221; it reads HFQHH. Residues 265-285 form a helical membrane-spanning segment; it reads YFFFIGPPLLIPVYFQFQIFH. The Lumenal segment spans residues 286–305; that stretch reads NMISHGMWVDLLWCISYYVR. The chain crosses the membrane as a helical span at residues 306 to 326; sequence YFLCYTQFYGVFWAIILFNFV. Residues 327 to 444 lie on the Cytoplasmic side of the membrane; it reads RFMESHWFVW…ELWLDAYLNK (118 aa). Positions 382-386 match the Histidine box-3 motif; the sequence is QIEHH.

It belongs to the fatty acid desaturase type 1 family.

The protein localises to the endoplasmic reticulum membrane. The enzyme catalyses (9Z,12Z)-octadecadienoyl-CoA + 2 Fe(II)-[cytochrome b5] + O2 + 2 H(+) = (6Z,9Z,12Z)-octadecatrienoyl-CoA + 2 Fe(III)-[cytochrome b5] + 2 H2O. The catalysed reaction is (9Z,12Z,15Z)-octadecatrienoyl-CoA + 2 Fe(II)-[cytochrome b5] + O2 + 2 H(+) = (6Z,9Z,12Z,15Z)-octadecatetraenoyl-CoA + 2 Fe(III)-[cytochrome b5] + 2 H2O. It catalyses the reaction (8Z,11Z,14Z,17Z)-eicosatetraenoyl-CoA + 2 Fe(II)-[cytochrome b5] + O2 + 2 H(+) = (5Z,8Z,11Z,14Z,17Z)-eicosapentaenoyl-CoA + 2 Fe(III)-[cytochrome b5] + 2 H2O. It carries out the reaction (8Z,11Z,14Z)-eicosatrienoyl-CoA + 2 Fe(II)-[cytochrome b5] + O2 + 2 H(+) = (5Z,8Z,11Z,14Z)-eicosatetraenoyl-CoA + 2 Fe(III)-[cytochrome b5] + 2 H2O. Its pathway is lipid metabolism; polyunsaturated fatty acid biosynthesis. In terms of biological role, fatty acid desaturase with bifunctional delta-5 and delta-6 activities. Component of a lipid metabolic pathway that catalyzes the biosynthesis of polyunsaturated fatty acids (PUFA) with preference toward n-3 substrates and Delta-6 function. The chain is Acyl-CoA 6-desaturase (fads2) from Danio rerio (Zebrafish).